The primary structure comprises 229 residues: Transmembrane protein 182 (229 aa).

The signal sequence occupies residues 1 to 26; it reads MRLNIAIFFGALFGALGVLLFLVAFG. Residues 27-114 are Extracellular-facing; that stretch reads SDYWLLATEV…SYDSAVIYRG (88 aa). The N-linked (GlcNAc...) asparagine glycan is linked to Asn47. The segment at 49-59 is interaction with ITGB1; that stretch reads TFHHEGFFWRC. Asn102 carries N-linked (GlcNAc...) asparagine glycosylation. Residues 115–135 traverse the membrane as a helical segment; the sequence is FWAVLMLLGVVAVVIASFLII. Over 136–153 the chain is Cytoplasmic; that stretch reads CAAPFASHFLYKAGGGSY. A helical membrane pass occupies residues 154–174; it reads IAAGILFSLVVMLYVIWVQAV. The Extracellular segment spans residues 175–200; sequence ADMESYRNMKMKDCLDFTPSVLYGWS. The helical transmembrane segment at 201 to 221 threads the bilayer; it reads FFLAPAGIFFSLLAGLLFLVV. The Cytoplasmic portion of the chain corresponds to 222 to 229; sequence GWHIQIHH.

It belongs to the TMEM182 family. As to quaternary structure, interacts with ITGB1.

It localises to the cell membrane. Its function is as follows. Negatively regulates myogenesis and skeletal muscle regeneration via its association with ITGB1. Modulates ITGB1 activation by decreasing ITGB1-LAMB1 interaction and inhibiting ITGB1-mediated intracellular signaling during myogenesis. The polypeptide is Transmembrane protein 182 (TMEM182) (Homo sapiens (Human)).